A 204-amino-acid chain; its full sequence is Outer-membrane lipoprotein carrier protein (204 aa).

An N-terminal signal peptide occupies residues 1–21; the sequence is MKKIAIVGALLTSFVASSVWA. The segment at 169 to 204 is disordered; it reads QRSSYQLKSQQNGAIDASKFTFTPPQGVTVDDQRNK. Residues 171 to 181 show a composition bias toward polar residues; it reads SSYQLKSQQNG.

The protein belongs to the LolA family. As to quaternary structure, monomer.

Its subcellular location is the periplasm. Participates in the translocation of lipoproteins from the inner membrane to the outer membrane. Only forms a complex with a lipoprotein if the residue after the N-terminal Cys is not an aspartate (The Asp acts as a targeting signal to indicate that the lipoprotein should stay in the inner membrane). The sequence is that of Outer-membrane lipoprotein carrier protein from Enterobacter sp. (strain 638).